Reading from the N-terminus, the 794-residue chain is Protein SPA1-RELATED 4 (794 aa).

The 268-residue stretch at 1–268 (MKGSSESSSR…MSELLQSEFI (268 aa)) folds into the Protein kinase domain. The segment at 126–165 (SCSDSGSDEDATTKSREIGSSRQEEILSERRSKQQEEVKK) is disordered. Residues 136–165 (ATTKSREIGSSRQEEILSERRSKQQEEVKK) are compositionally biased toward basic and acidic residues. Positions 272 to 326 (RENLEEREAAMELRDRIEEQELLLEFLFLIQQRKQEAADKLQDTISLLSSDIDQV) form a coiled coil. 2 disordered regions span residues 352-373 (QGAE…EESK) and 428-447 (GRSS…INDS). Positions 358 to 369 (AAEEENDDNSID) are enriched in acidic residues. 7 WD repeats span residues 482 to 521 (NSSN…KDGR), 531 to 571 (ASRS…LVTE), 574 to 614 (EHEK…SIGT), 616 to 656 (KTKA…LPLC), 660 to 698 (GHHK…SGIN), 707 to 746 (GHTN…PVLS), and 762 to 794 (DASQ…LEMV). A DWD box motif is present at residues 635-649 (AFGSADHKVYYYDLR).

In terms of assembly, interacts with COP1 and CO. Binds to CRY1 in response to blue light, this interaction prevents SPA1/COP1 complex formation and thus avoid COP1-dependent degradation of the transcription factor HY5 by the proteasome and promotes hypocotyl elongation.

It localises to the nucleus. Functionally, repressor of photomorphogenesis in the light. Probably part of the COP1/SPA E3 ubiquitin-protein ligase complex. In Arabidopsis thaliana (Mouse-ear cress), this protein is Protein SPA1-RELATED 4 (SPA4).